A 248-amino-acid polypeptide reads, in one-letter code: Triosephosphate isomerase (248 aa).

9–11 (NWK) is a binding site for substrate. His-94 (electrophile) is an active-site residue. Catalysis depends on Glu-166, which acts as the Proton acceptor. Residues Gly-172, Ser-212, and 233 to 234 (GG) each bind substrate.

Belongs to the triosephosphate isomerase family. As to quaternary structure, homodimer.

It is found in the cytoplasm. The catalysed reaction is D-glyceraldehyde 3-phosphate = dihydroxyacetone phosphate. It participates in carbohydrate biosynthesis; gluconeogenesis. Its pathway is carbohydrate degradation; glycolysis; D-glyceraldehyde 3-phosphate from glycerone phosphate: step 1/1. Its function is as follows. Involved in the gluconeogenesis. Catalyzes stereospecifically the conversion of dihydroxyacetone phosphate (DHAP) to D-glyceraldehyde-3-phosphate (G3P). This chain is Triosephosphate isomerase, found in Alkaliphilus metalliredigens (strain QYMF).